Consider the following 629-residue polypeptide: 1-deoxy-D-xylulose-5-phosphate synthase (629 aa).

Thiamine diphosphate is bound by residues His-85 and 126-128; that span reads GHS. Asp-157 serves as a coordination point for Mg(2+). Thiamine diphosphate contacts are provided by residues 158-159, Asn-186, Tyr-293, and Glu-373; that span reads GS. Asn-186 provides a ligand contact to Mg(2+).

The protein belongs to the transketolase family. DXPS subfamily. As to quaternary structure, homodimer. Mg(2+) is required as a cofactor. Requires thiamine diphosphate as cofactor.

The catalysed reaction is D-glyceraldehyde 3-phosphate + pyruvate + H(+) = 1-deoxy-D-xylulose 5-phosphate + CO2. Its pathway is metabolic intermediate biosynthesis; 1-deoxy-D-xylulose 5-phosphate biosynthesis; 1-deoxy-D-xylulose 5-phosphate from D-glyceraldehyde 3-phosphate and pyruvate: step 1/1. Its function is as follows. Catalyzes the acyloin condensation reaction between C atoms 2 and 3 of pyruvate and glyceraldehyde 3-phosphate to yield 1-deoxy-D-xylulose-5-phosphate (DXP). The sequence is that of 1-deoxy-D-xylulose-5-phosphate synthase from Helicobacter hepaticus (strain ATCC 51449 / 3B1).